The sequence spans 284 residues: 2,3,4,5-tetrahydropyridine-2,6-dicarboxylate N-succinyltransferase (284 aa).

Positions 111 and 148 each coordinate substrate.

The protein belongs to the transferase hexapeptide repeat family. Homotrimer.

Its subcellular location is the cytoplasm. The enzyme catalyses (S)-2,3,4,5-tetrahydrodipicolinate + succinyl-CoA + H2O = (S)-2-succinylamino-6-oxoheptanedioate + CoA. It functions in the pathway amino-acid biosynthesis; L-lysine biosynthesis via DAP pathway; LL-2,6-diaminopimelate from (S)-tetrahydrodipicolinate (succinylase route): step 1/3. This is 2,3,4,5-tetrahydropyridine-2,6-dicarboxylate N-succinyltransferase from Brucella anthropi (strain ATCC 49188 / DSM 6882 / CCUG 24695 / JCM 21032 / LMG 3331 / NBRC 15819 / NCTC 12168 / Alc 37) (Ochrobactrum anthropi).